The sequence spans 88 residues: Exodeoxyribonuclease 7 small subunit (88 aa).

A disordered region spans residues 69 to 88; that stretch reads ALAEEADPEDGASGADGGGA.

The protein belongs to the XseB family. In terms of assembly, heterooligomer composed of large and small subunits.

The protein localises to the cytoplasm. It carries out the reaction Exonucleolytic cleavage in either 5'- to 3'- or 3'- to 5'-direction to yield nucleoside 5'-phosphates.. In terms of biological role, bidirectionally degrades single-stranded DNA into large acid-insoluble oligonucleotides, which are then degraded further into small acid-soluble oligonucleotides. The sequence is that of Exodeoxyribonuclease 7 small subunit from Streptomyces coelicolor (strain ATCC BAA-471 / A3(2) / M145).